We begin with the raw amino-acid sequence, 427 residues long: Inward rectifier potassium channel 2 (427 aa).

Residues 1–81 (MGSVRTNRYS…IFTTCVDIRW (81 aa)) lie on the Cytoplasmic side of the membrane. Cys-76 carries the post-translational modification S-nitrosocysteine. Residues 82–106 (RWMLVIFCLAFVLSWLFFGCVFWLI) form a helical membrane-spanning segment. Over 107-128 (ALLHGDLDASKESKACVSEVNS) the chain is Extracellular. The helical; Pore-forming intramembrane region spans 129–140 (FTAAFLFSIETQ). An intramembrane region (pore-forming) is located at residues 141 to 147 (TTIGYGF). Residues 142–147 (TIGYGF) carry the Selectivity filter motif. Residues 148–156 (RCVTDECPV) are Extracellular-facing. A helical transmembrane segment spans residues 157–178 (AVFMVVFQSIVGCIIDAFIIGA). The Cytoplasmic segment spans residues 179 to 427 (VMAKMAKPKK…PRPLRRESEI (249 aa)). The interval 181-208 (AKMAKPKKRNETLVFSHNAVIAMRDGKL) is polyphosphoinositide (PIP2)-binding. Residues 384 to 427 (SKEEDDSENGVPESTSTDTPPDLDLHNQASVPLEPRPLRRESEI) form a disordered region. The short motif at 425-427 (SEI) is the PDZ-binding element.

This sequence belongs to the inward rectifier-type potassium channel (TC 1.A.2.1) family. KCNJ2 subfamily. In terms of assembly, homotetramer. Homomultimeric and heteromultimeric association with KCNJ4/Kir2.3. Can form heteromeric channels with Kir2.6/KCNJ18. Associates, via its PDZ-recognition domain, with a complex containing LIN7A, LIN7B, LIN7C, DLG1, CASK and APBA1. Post-translationally, S-nitrosylation increases the open probability and inward rectifying currents.

Its subcellular location is the cell membrane. The protein resides in the sarcolemma. The protein localises to the T-tubule. The enzyme catalyses K(+)(in) = K(+)(out). With respect to regulation, activated by phosphatidylinositol 4,5 biphosphate (PtdIns(4,5)P2). In terms of biological role, inward rectifier potassium channels are characterized by a greater tendency to allow potassium to flow into the cell rather than out of it. Their voltage dependence is regulated by the concentration of extracellular potassium; as external potassium is raised, the voltage range of the channel opening shifts to more positive voltages. The inward rectification is mainly due to the blockage of outward current by internal magnesium. Blocked by external barium or cesium. Probably participates in establishing action potential waveform and excitability of neuronal and muscle tissues. This Canis lupus familiaris (Dog) protein is Inward rectifier potassium channel 2 (KCNJ2).